Consider the following 365-residue polypeptide: Sulfotransferase 2B1 (365 aa).

Residue 70 to 75 (KSGTTW) coordinates 3'-phosphoadenylyl sulfate. Substrate contacts are provided by Trp98, Trp103, and His125. Catalysis depends on His125, which acts as the Proton acceptor. Residues Arg147, Ser155, Tyr210, 244-249 (STFSAM), and 274-276 (RKG) each bind 3'-phosphoadenylyl sulfate. Residues 303-365 (GMPTFPWDED…ASETPHPRPS (63 aa)) form a disordered region. The segment covering 309–325 (WDEDPEEDGSPDPEPSP) has biased composition (acidic residues). Ser348 carries the post-translational modification Phosphoserine.

It belongs to the sulfotransferase 1 family. Phosphorylated. Expressed in the stratum granulosum-stratum corneum junction in the skin (at protein level). Expressed highly in placenta, prostate and trachea and lower expression in the small intestine and lung.

It localises to the cytoplasm. Its subcellular location is the cytosol. The protein resides in the microsome. The protein localises to the nucleus. The enzyme catalyses an alcohol + 3'-phosphoadenylyl sulfate = an alkyl sulfate + adenosine 3',5'-bisphosphate + H(+). It carries out the reaction 3beta-hydroxyandrost-5-en-17-one + 3'-phosphoadenylyl sulfate = dehydroepiandrosterone 3-sulfate + adenosine 3',5'-bisphosphate + H(+). The catalysed reaction is (24S)-hydroxycholesterol + 3'-phosphoadenylyl sulfate = (24S)-hydroxycholesterol 3-sulfate + adenosine 3',5'-bisphosphate + H(+). It catalyses the reaction cholesterol + 3'-phosphoadenylyl sulfate = cholesterol sulfate + adenosine 3',5'-bisphosphate + H(+). The enzyme catalyses pregnenolone + 3'-phosphoadenylyl sulfate = pregnenolone sulfate + adenosine 3',5'-bisphosphate + H(+). Its function is as follows. Sulfotransferase that utilizes 3'-phospho-5'-adenylyl sulfate (PAPS) as sulfonate donor to catalyze the sulfate conjugation. Responsible for the sulfation of cholesterol. Catalyzes sulfation of the 3beta-hydroxyl groups of steroids, such as, pregnenolone and dehydroepiandrosterone (DHEA). Preferentially sulfonates cholesterol, while it also has significant activity with pregnenolone and DHEA. Plays a role in epidermal cholesterol metabolism and in the regulation of epidermal proliferation and differentiation. In terms of biological role, sulfonates pregnenolone but not cholesterol. The chain is Sulfotransferase 2B1 (SULT2B1) from Homo sapiens (Human).